The primary structure comprises 160 residues: Anaerobic nitrite reductase MHB1 (160 aa).

Positions 8-157 constitute a Globin domain; the sequence is GFTEEQEALV…LVNAIKSEMK (150 aa). Positions 41–45 match the Homodimerization motif; the sequence is EIAPS. The heme b site is built by serine 51, lysine 65, histidine 69, lysine 99, and histidine 104. A Homodimerization motif is present at residues 111–123; it reads DEHFEVTKFALLE.

It belongs to the plant globin family. In terms of assembly, homodimer. It depends on heme b as a cofactor. In terms of tissue distribution, root specific.

Its subcellular location is the nucleus matrix. The protein localises to the cytoplasm. The catalysed reaction is Fe(III)-heme b-[protein] + nitric oxide + H2O = Fe(II)-heme b-[protein] + nitrite + 2 H(+). Functionally, phytoglobin that reduces nitrite to nitric oxide (NO) under anoxic conditions (e.g. during flooding or in waterlogged soil) and upon root nodulation. Required for general plant development and during nodulation, especially for the onset of symbiosis. Monitors nitric oxide (NO) levels during early phase of the nitrogen-fixing symbiosis and buffers oxygen in functioning nodules. May not function as an oxygen storage or transport protein. Has an unusually high affinity for O(2) through a hexacoordinate heme iron because of a very low dissociation constant. The protein is Anaerobic nitrite reductase MHB1 of Medicago sativa (Alfalfa).